A 237-amino-acid chain; its full sequence is Ribonuclease PH (237 aa).

Phosphate-binding positions include Arg-86 and 124-126 (GTR).

It belongs to the RNase PH family. In terms of assembly, homohexameric ring arranged as a trimer of dimers.

The enzyme catalyses tRNA(n+1) + phosphate = tRNA(n) + a ribonucleoside 5'-diphosphate. In terms of biological role, phosphorolytic 3'-5' exoribonuclease that plays an important role in tRNA 3'-end maturation. Removes nucleotide residues following the 3'-CCA terminus of tRNAs; can also add nucleotides to the ends of RNA molecules by using nucleoside diphosphates as substrates, but this may not be physiologically important. Probably plays a role in initiation of 16S rRNA degradation (leading to ribosome degradation) during starvation. This Zymomonas mobilis subsp. mobilis (strain ATCC 31821 / ZM4 / CP4) protein is Ribonuclease PH.